Consider the following 122-residue polypeptide: MAWVSFYLLPFIFSTGLCALPVLTQPPSASALLGASIKLTCTLSSEHSTYTIEWYQQRPGRSPQYIMKVKSDGSHSKGDGIPDRFMGSSSGADRYLTFSNLQSDDEAEYHCGESHTIDGQVG.

Positions 1 to 19 are cleaved as a signal peptide; the sequence is MAWVSFYLLPFIFSTGLCA. Positions 20–44 are framework-1; the sequence is LPVLTQPPSASALLGASIKLTCTLS. The region spanning 21–122 is the Ig-like domain; it reads PVLTQPPSAS…ESHTIDGQVG (102 aa). Cysteines 41 and 111 form a disulfide. Residues 45–51 are complementarity-determining-1; the sequence is SEHSTYT. The tract at residues 52-68 is framework-2; that stretch reads IEWYQQRPGRSPQYIMK. The segment at 69 to 75 is complementarity-determining-2; it reads VKSDGSH. The interval 76-111 is framework-3; that stretch reads SKGDGIPDRFMGSSSGADRYLTFSNLQSDDEAEYHC. Residues 112–122 are complementarity-determining-3; the sequence is GESHTIDGQVG.

In terms of assembly, immunoglobulins are composed of two identical heavy chains and two identical light chains; disulfide-linked.

It localises to the secreted. Its subcellular location is the cell membrane. In terms of biological role, v region of the variable domain of immunoglobulin light chains that participates in the antigen recognition. Immunoglobulins, also known as antibodies, are membrane-bound or secreted glycoproteins produced by B lymphocytes. In the recognition phase of humoral immunity, the membrane-bound immunoglobulins serve as receptors which, upon binding of a specific antigen, trigger the clonal expansion and differentiation of B lymphocytes into immunoglobulins-secreting plasma cells. Secreted immunoglobulins mediate the effector phase of humoral immunity, which results in the elimination of bound antigens. The antigen binding site is formed by the variable domain of one heavy chain, together with that of its associated light chain. Thus, each immunoglobulin has two antigen binding sites with remarkable affinity for a particular antigen. The variable domains are assembled by a process called V-(D)-J rearrangement and can then be subjected to somatic hypermutations which, after exposure to antigen and selection, allow affinity maturation for a particular antigen. This Homo sapiens (Human) protein is Immunoglobulin lambda variable 4-3.